The chain runs to 195 residues: dCTP deaminase, dUMP-forming (195 aa).

DCTP contacts are provided by residues 105–110 (RSSLGR), aspartate 123, 131–133 (TLE), glutamine 152, tyrosine 166, lysine 173, and glutamine 177. The Proton donor/acceptor role is filled by glutamate 133. The segment at 161-195 (PADRPYGDERGSKYQDQDGPQASRIRGDREFGGTQ) is disordered. Over residues 165–176 (PYGDERGSKYQD) the composition is skewed to basic and acidic residues. Residues 185 to 195 (IRGDREFGGTQ) are compositionally biased toward basic and acidic residues.

Belongs to the dCTP deaminase family. In terms of assembly, homotrimer.

The catalysed reaction is dCTP + 2 H2O = dUMP + NH4(+) + diphosphate. It participates in pyrimidine metabolism; dUMP biosynthesis; dUMP from dCTP: step 1/1. Its function is as follows. Bifunctional enzyme that catalyzes both the deamination of dCTP to dUTP and the hydrolysis of dUTP to dUMP without releasing the toxic dUTP intermediate. The chain is dCTP deaminase, dUMP-forming from Halobacterium salinarum (strain ATCC 700922 / JCM 11081 / NRC-1) (Halobacterium halobium).